The primary structure comprises 364 residues: DNA replication and repair protein RecF (364 aa).

An ATP-binding site is contributed by 30-37; the sequence is GNNGMGKT.

It belongs to the RecF family.

Its subcellular location is the cytoplasm. The RecF protein is involved in DNA metabolism; it is required for DNA replication and normal SOS inducibility. RecF binds preferentially to single-stranded, linear DNA. It also seems to bind ATP. The polypeptide is DNA replication and repair protein RecF (Porphyromonas gingivalis (strain ATCC BAA-308 / W83)).